We begin with the raw amino-acid sequence, 119 residues long: Hydrogenase maturation factor HypA (119 aa).

His-2 is a binding site for Ni(2+). The Zn(2+) site is built by Cys-73, Cys-76, Cys-90, and Cys-93.

This sequence belongs to the HypA/HybF family.

In terms of biological role, involved in the maturation of [NiFe] hydrogenases. Required for nickel insertion into the metal center of the hydrogenase. The protein is Hydrogenase maturation factor HypA of Wolinella succinogenes (strain ATCC 29543 / DSM 1740 / CCUG 13145 / JCM 31913 / LMG 7466 / NCTC 11488 / FDC 602W) (Vibrio succinogenes).